Here is a 172-residue protein sequence, read N- to C-terminus: MIIYRDLISHDELFSDIYKIREIADGLCLEVEGKMVSRTEGAIDDSLIGGNASAEGPEGEGTESTVVTGVDIVMNHHLQETSFTKEAYKKYIKDYMKSLKGKLEEQKPERVKPFMTGAAEQIKHILANFNNYQFFIGENMNPDGMVALLDYREDGVTPFMIFFKDGLEMEKC.

In terms of domain architecture, TCTP spans 1 to 172; that stretch reads MIIYRDLISH…FKDGLEMEKC (172 aa). Phosphoserine occurs at positions 46 and 53. Serine 64 is subject to Phosphoserine; by PLK1. Positions 70 to 172 are required for reduction of TSC22D1 protein stability; sequence VDIVMNHHLQ…FKDGLEMEKC (103 aa).

The protein belongs to the TCTP family. As to quaternary structure, homodimer. Interacts with STEAP3. Interacts with TSC22D1; interaction results in the destabilization of TSC22D1 protein.

It is found in the cytoplasm. In terms of biological role, involved in calcium binding and microtubule stabilization. Acts as a negative regulator of TSC22D1-mediated apoptosis, via interaction with and destabilization of TSC22D1 protein. In Mus musculus (Mouse), this protein is Translationally-controlled tumor protein (Tpt1).